A 133-amino-acid polypeptide reads, in one-letter code: Protein U17 (133 aa).

The helical transmembrane segment at 82-102 (FVSVLWCVILVFVVKIKLFFL) threads the bilayer.

It localises to the membrane. In Homo sapiens (Human), this protein is Protein U17 (U17/U16).